The following is a 511-amino-acid chain: Maturase K (511 aa).

This sequence belongs to the intron maturase 2 family. MatK subfamily.

The protein localises to the plastid. Its subcellular location is the chloroplast. Functionally, usually encoded in the trnK tRNA gene intron. Probably assists in splicing its own and other chloroplast group II introns. The chain is Maturase K from Bromus inermis (Smooth brome grass).